Reading from the N-terminus, the 168-residue chain is Protein FAM163A (168 aa).

The chain crosses the membrane as a helical span at residues 6-26; the sequence is VVITGGILATVILLCIIAVLC.

It belongs to the FAM163 family.

The protein resides in the membrane. In Mus musculus (Mouse), this protein is Protein FAM163A (Fam163a).